The primary structure comprises 171 residues: Cytochrome c oxidase subunit 5b-2, mitochondrial (171 aa).

The N-terminal 54 residues, 1-54, are a transit peptide targeting the mitochondrion; it reads MWRRIVSSHLKSISAVGSCAAPSCRHAVVESTHLSLSTRASSIPAYSSIFSRLI. 3 residues coordinate Zn(2+): Cys121, Cys145, and Cys148.

It belongs to the cytochrome c oxidase subunit 5B (TC 3.D.4.11) family.

The protein resides in the mitochondrion inner membrane. Its function is as follows. This protein is one of the nuclear-coded polypeptide chains of cytochrome c oxidase, the terminal oxidase in mitochondrial electron transport. The chain is Cytochrome c oxidase subunit 5b-2, mitochondrial (COX5B-2) from Arabidopsis thaliana (Mouse-ear cress).